A 169-amino-acid chain; its full sequence is ALK and LTK ligand 2a (169 aa).

Residues 1-25 (MRALRAPVLVMGLVLLICTAAQSDA) form the signal peptide. The tract at residues 45 to 68 (ENSADDESAQKTESAPEPKDTHHL) is disordered. Basic and acidic residues predominate over residues 52-67 (SAQKTESAPEPKDTHH). Intrachain disulfides connect Cys130-Cys166 and Cys144-Cys153.

It belongs to the ALKAL family. In terms of assembly, homodimer. Expressed at high level in the notochord and iridophore stripes of the trunk, as well as in the eye and swim bladder.

It localises to the secreted. The protein localises to the cell membrane. Functionally, cytokine that acts as a physiological ligand for receptor tyrosine kinases LTK and ALK. Required for neural crest cell differentiation and iridophore development during embryonic iridophore development and adult stripe development by acting as a receptor for LTK. The polypeptide is ALK and LTK ligand 2a (Danio rerio (Zebrafish)).